Here is a 199-residue protein sequence, read N- to C-terminus: Ribonuclease HII (199 aa).

In terms of domain architecture, RNase H type-2 spans 9–198; it reads QFVAGVDEVG…VRAAIEQMNL (190 aa). A divalent metal cation is bound by residues D15, E16, and D107.

It belongs to the RNase HII family. The cofactor is Mn(2+). Requires Mg(2+) as cofactor.

The protein localises to the cytoplasm. The catalysed reaction is Endonucleolytic cleavage to 5'-phosphomonoester.. In terms of biological role, endonuclease that specifically degrades the RNA of RNA-DNA hybrids. The polypeptide is Ribonuclease HII (Saccharophagus degradans (strain 2-40 / ATCC 43961 / DSM 17024)).